A 209-amino-acid polypeptide reads, in one-letter code: NAD(P)H dehydrogenase (quinone) (209 aa).

In terms of domain architecture, Flavodoxin-like spans 4–199 (VNIIFYSMYG…AMARYQGRHV (196 aa)). FMN contacts are provided by residues 10-15 (SMYGHV) and 87-89 (TRY). Y12 is a binding site for NAD(+). Residue W107 coordinates substrate. FMN contacts are provided by residues 122–128 (SSGTQHG) and H143.

This sequence belongs to the WrbA family. FMN is required as a cofactor.

The enzyme catalyses a quinone + NADH + H(+) = a quinol + NAD(+). The catalysed reaction is a quinone + NADPH + H(+) = a quinol + NADP(+). The polypeptide is NAD(P)H dehydrogenase (quinone) (Methanosarcina acetivorans (strain ATCC 35395 / DSM 2834 / JCM 12185 / C2A)).